The chain runs to 728 residues: Methylmalonyl-CoA mutase large subunit (728 aa).

Tyr75, Met78, Arg82, Thr85, Arg87, Tyr89, and Ser114 together coordinate (R)-methylmalonyl-CoA. Cob(II)alamin contacts are provided by Phe117 and Ala139. 2 residues coordinate (R)-methylmalonyl-CoA: Thr195 and Gln197. The cob(II)alamin site is built by Val206 and Arg207. (R)-methylmalonyl-CoA is bound by residues Arg207, His244, Arg283, and Ser285. Positions 333, 370, 373, 609, 610, 611, 612, 655, 657, 686, and 709 each coordinate cob(II)alamin. Residues Arg597–Ala728 enclose the B12-binding domain.

Belongs to the methylmalonyl-CoA mutase family. Heterodimer of an alpha and a beta chain. Adenosylcob(III)alamin serves as cofactor.

The catalysed reaction is (R)-methylmalonyl-CoA = succinyl-CoA. Catalyzes the reversible conversion of succinyl-CoA to (R)-methylmalonyl-CoA through a radical mechanism. Is involved in the fermentation of pyruvate to propanoate that occurs in Propionibacteria. This chain is Methylmalonyl-CoA mutase large subunit (mutB), found in Propionibacterium freudenreichii subsp. shermanii.